The following is a 455-amino-acid chain: Venom prothrombin activator nigrarin-D (455 aa).

Positions 1–20 (MAPPLLLCLILTFLWNLPEA) are cleaved as a signal peptide. Residues 21 to 40 (ESNVFLKSKVANRFLQRTKR) constitute a propeptide that is removed on maturation. Residues 41-86 (SNSIFEEFKAGNIERECIEEKCSKEEAREVFEDNEKTETFWNVYVD) form the Gla domain. 4-carboxyglutamate is present on residues Glu46, Glu47, Glu54, Glu56, Glu59, Glu60, Glu65, Glu66, Glu69, Glu72, and Glu75. Cys57 and Cys62 form a disulfide bridge. The 37-residue stretch at 86 to 122 (DGDQCSSNPCHYRGTCKDGIGSYTCTCLPNYEGKNCE) folds into the EGF-like 1; calcium-binding domain. Cystine bridges form between Cys90-Cys101, Cys95-Cys110, Cys112-Cys121, Cys129-Cys140, Cys136-Cys149, Cys151-Cys164, Cys172-Cys328, Cys216-Cys221, Cys236-Cys252, Cys376-Cys390, and Cys401-Cys429. O-linked (Hex...) serine glycosylation is present at Ser92. An EGF-like 2 domain is found at 129-164 (CRVFNGNCWHFCKSVQNEIQCSCAESYRLGDDGHSC). Positions 182–209 (REASLPDFVQSQKAILLKKSDNPSPDIR) are cleaved as a propeptide — activation peptide. The Peptidase S1 domain maps to 210–453 (IINGMDCKLG…FIPWIKAIMS (244 aa)). His251 (charge relay system) is an active-site residue. Asn254 carries an N-linked (GlcNAc...) asparagine glycan. Asp308 serves as the catalytic Charge relay system. The active-site Charge relay system is Ser405.

The protein belongs to the peptidase S1 family. Snake venom subfamily. As to quaternary structure, heterodimer of a light chain and a heavy chain; disulfide-linked. Post-translationally, the vitamin K-dependent, enzymatic carboxylation of some glutamate residues allows the modified protein to bind calcium. As to expression, expressed by the venom gland.

The protein resides in the secreted. It catalyses the reaction Selective cleavage of Arg-|-Thr and then Arg-|-Ile bonds in prothrombin to form thrombin.. Its function is as follows. Snake prothrombin activator that attacks the hemostatic system of prey. This protein is functionally similar to blood coagulation factor Xa. The sequence is that of Venom prothrombin activator nigrarin-D from Cryptophis nigrescens (Eastern small-eyed snake).